Consider the following 134-residue polypeptide: MVKNTIEESVATGRRKQAVSSVRLRPGTGKIDVNGKAFEEYFPLEIQRVTILSPLMKVLGTTNECDLIIRINGGGIQGQVIATRLGLARALLKKNVDSKQELKSHGFLTRDPRKKERKKYGHKKARKSFQFSKR.

Residues 98-114 (SKQELKSHGFLTRDPRK) are compositionally biased toward basic and acidic residues. The interval 98-134 (SKQELKSHGFLTRDPRKKERKKYGHKKARKSFQFSKR) is disordered. Residues 115–134 (KERKKYGHKKARKSFQFSKR) show a composition bias toward basic residues.

It belongs to the universal ribosomal protein uS9 family.

In Chlamydia caviae (strain ATCC VR-813 / DSM 19441 / 03DC25 / GPIC) (Chlamydophila caviae), this protein is Small ribosomal subunit protein uS9.